A 236-amino-acid chain; its full sequence is UPF0502 protein Bcen2424_5610 (236 aa).

Belongs to the UPF0502 family.

In Burkholderia cenocepacia (strain HI2424), this protein is UPF0502 protein Bcen2424_5610.